Consider the following 576-residue polypeptide: Sulfite reductase [NADPH] hemoprotein beta-component (576 aa).

Residues Cys-435, Cys-441, Cys-480, and Cys-484 each coordinate [4Fe-4S] cluster. Position 484 (Cys-484) interacts with siroheme.

The protein belongs to the nitrite and sulfite reductase 4Fe-4S domain family. Alpha(8)-beta(8). The alpha component is a flavoprotein, the beta component is a hemoprotein. Requires siroheme as cofactor. [4Fe-4S] cluster serves as cofactor.

It catalyses the reaction hydrogen sulfide + 3 NADP(+) + 3 H2O = sulfite + 3 NADPH + 4 H(+). Its pathway is sulfur metabolism; hydrogen sulfide biosynthesis; hydrogen sulfide from sulfite (NADPH route): step 1/1. Component of the sulfite reductase complex that catalyzes the 6-electron reduction of sulfite to sulfide. This is one of several activities required for the biosynthesis of L-cysteine from sulfate. The polypeptide is Sulfite reductase [NADPH] hemoprotein beta-component (Yersinia pseudotuberculosis serotype O:1b (strain IP 31758)).